A 375-amino-acid chain; its full sequence is Chanoclavine-I aldehyde reductase ifgG (375 aa).

FMN contacts are provided by residues 31 to 33 (PTT), A66, Q108, and H176. H176 and N179 together coordinate substrate. Y181 (proton donor) is an active-site residue. Residues K228, G300, 325-326 (GR), and R326 each bind FMN. Residue Y353 coordinates substrate.

It belongs to the NADH:flavin oxidoreductase/NADH oxidase family. FMN is required as a cofactor.

The catalysed reaction is dihydrochanoclavine-I aldehyde + NADP(+) = chanoclavine-I aldehyde + NADPH + H(+). It participates in alkaloid biosynthesis; ergot alkaloid biosynthesis. Its function is as follows. Chanoclavine-I aldehyde reductase; part of the gene cluster that mediates the biosynthesis of isofumigaclavines, fungal ergot alkaloids. The tryptophan dimethylallyltransferase ifgA catalyzes the first step of ergot alkaloid biosynthesis by condensing dimethylallyl diphosphate (DMAP) and tryptophan to form 4-dimethylallyl-L-tryptophan. The second step is catalyzed by the methyltransferase ifgB that methylates 4-dimethylallyl-L-tryptophan in the presence of S-adenosyl-L-methionine, resulting in the formation of N-methyl-dimethylallyl-L-tryptophan. The catalase ifgD and the FAD-dependent oxidoreductase ifgC then transform N-methyl-dimethylallyl-L-tryptophan to chanoclavine-I which is further oxidized by ifgE in the presence of NAD(+), resulting in the formation of chanoclavine-I aldehyde. The chanoclavine-I aldehyde reductases ifgG and/or fgaOx3 reduce chanoclavine-I aldehyde to dihydrochanoclavine-I aldehyde that spontaneously dehydrates to form 6,8-dimethyl-6,7-didehydroergoline. The festuclavine dehydrogenases ifgF1 and/or ifgF2 then catalyze the reduction of 6,8-dimethyl-6,7-didehydroergoline to form festuclavine. Hydrolysis of festuclavine by a yet undetermined cytochrome P450 monooxygenase (called ifgH) then leads to the formation of isofumigaclavine B which is in turn acetylated by ifgI to isofumigaclavine A. Penicillium roqueforti has interestingly at least two sets of genes for the consumption of chanoclavine-I aldehyde on three different loci, the OYEs ifgG/fgaOx3 and the festuclavine synthase homologs ifgF1/ifgF2. The reason for the duplication of these genes is unclear, probably to ensure the conversion of chanoclavine-I aldehyde by differential gene expression under various environmental conditions. In Penicillium roqueforti (strain FM164), this protein is Chanoclavine-I aldehyde reductase ifgG.